A 165-amino-acid polypeptide reads, in one-letter code: UPF0114 protein in repA1-repA2 intergenic region (165 aa).

3 helical membrane passes run 10–32, 53–75, and 136–155; these read YASR…LLTL, LILI…MVMF, and IMWC…GMAC.

The protein belongs to the UPF0114 family.

It is found in the cell membrane. This is UPF0114 protein in repA1-repA2 intergenic region from Buchnera aphidicola subsp. Geoica urticularia.